The chain runs to 233 residues: Ribosome maturation protein SDO1 homolog (233 aa).

This sequence belongs to the SDO1/SBDS family.

In Aeropyrum pernix (strain ATCC 700893 / DSM 11879 / JCM 9820 / NBRC 100138 / K1), this protein is Ribosome maturation protein SDO1 homolog.